The primary structure comprises 1369 residues: MutS protein homolog 5 (1369 aa).

Residues 138 to 190 (IYEDGTTEEGTSEDTVPTWDSSLAYSTDETTAEKEEKEEDEDDDDEGLPAKLN) are disordered. Over residues 173-184 (EKEEDEDDDDEG) the composition is skewed to acidic residues. 639 to 646 (GPNACGKS) is a binding site for ATP. Disordered regions lie at residues 880 to 915 (SMRN…SVLS), 935 to 1135 (KKKK…RSSN), 1153 to 1182 (LKSQ…HSQN), and 1248 to 1278 (NFIF…SSIS). Basic and acidic residues predominate over residues 884-894 (VSEEIEKERSE). Polar residues-rich tracts occupy residues 895–915 (ASTP…SVLS) and 941–950 (TGSSMESSMS). A compositionally biased stretch (acidic residues) spans 954-967 (FQEEDEGTEGEEDQ). The span at 991-1003 (QSINSRHSFSTRT) shows a compositional bias: polar residues. A compositionally biased stretch (low complexity) spans 1024–1037 (STSTSSPGPSASKS). Polar residues predominate over residues 1049-1065 (VKESQVLETPKQLSISS). Basic and acidic residues predominate over residues 1073 to 1084 (SSEKDVISRVSE). Composition is skewed to polar residues over residues 1111–1124 (KNRS…QSAR) and 1153–1167 (LKSQ…TPRS). Positions 1254-1263 (PEPRSSEKQR) are enriched in basic and acidic residues.

It belongs to the DNA mismatch repair MutS family. Heterooligomer of him-14 and msh-5. Interacts with the brc-1-brd-1 heterodimer. As to expression, expressed in the germline.

It localises to the chromosome. Crucial component in meiotic recombination, functioning at some point after the initiation step of recombination. Plays a role in promoting the crossover outcome of meiotic recombination events. Required for formation of normal meiotic crossover, and crossover and chiasmata generated by artificially made DNA breaks. Together with him-14 and zhp-3 plays a role in the activation of DNA damage-dependent apoptosis at the DNA damage checkpoint in pachytene cells. The protein is MutS protein homolog 5 of Caenorhabditis elegans.